The sequence spans 509 residues: Ribonuclease Y (509 aa).

A helical transmembrane segment spans residues 3–23 (WILYVILPAVCIILGWTIRWL). A KH domain is found at 199–284 (TVSTVSLPSD…EIVQKVTREI (86 aa)). The HD domain maps to 325–418 (VLQHSKEVAI…VQIADAISAA (94 aa)).

This sequence belongs to the RNase Y family.

It is found in the cell membrane. In terms of biological role, endoribonuclease that initiates mRNA decay. The sequence is that of Ribonuclease Y from Treponema denticola (strain ATCC 35405 / DSM 14222 / CIP 103919 / JCM 8153 / KCTC 15104).